The primary structure comprises 375 residues: Hydrogenase-1 small chain (375 aa).

Residues 1 to 47 (MNTNNEETFYQAMRRKGVSRRSFLKYCSLAATSLGLGAAMTPRIAWA) constitute a signal peptide (tat-type signal). Residues Cys64, Cys67, Cys162, Cys196, His234, Cys237, Cys262, and Cys268 each contribute to the [4Fe-4S] cluster site. Cys277, Cys296, and Cys299 together coordinate [3Fe-4S] cluster. The disordered stretch occupies residues 353-375 (HNRHKQQLADAGQQSPDNEDKQA).

This sequence belongs to the [NiFe]/[NiFeSe] hydrogenase small subunit family. Heterodimer of a large and a small subunit. Requires [4Fe-4S] cluster as cofactor. [3Fe-4S] cluster is required as a cofactor. In terms of processing, predicted to be exported by the Tat system. The position of the signal peptide cleavage has not been experimentally proven.

The protein localises to the cell membrane. It carries out the reaction H2 + A = AH2. The chain is Hydrogenase-1 small chain (hyaA) from Citrobacter freundii.